We begin with the raw amino-acid sequence, 910 residues long: Chitin synthase A (910 aa).

The segment at 56 to 156 (NYHDDYDPRP…EPAPTPTPAP (101 aa)) is disordered. Basic and acidic residues-rich tracts occupy residues 57-84 (YHDD…HHDA) and 130-148 (DPHD…HDEP). 9 consecutive transmembrane segments (helical) span residues 366-386 (WFFQ…IDAG), 448-468 (SAFG…YVAL), 583-603 (VYQT…FLVF), 620-640 (VLFI…FILS), 655-675 (MVYF…FITV), 701-721 (TLII…IIFL), 730-750 (FIQY…YAFC), 828-848 (GVVL…LQAG), and 876-896 (LYSV…FLVV).

The protein belongs to the chitin synthase family. Class I subfamily.

The protein resides in the cell membrane. The catalysed reaction is [(1-&gt;4)-N-acetyl-beta-D-glucosaminyl](n) + UDP-N-acetyl-alpha-D-glucosamine = [(1-&gt;4)-N-acetyl-beta-D-glucosaminyl](n+1) + UDP + H(+). Functionally, polymerizes chitin, a structural polymer of the cell wall and septum, by transferring the sugar moiety of UDP-GlcNAc to the non-reducing end of the growing chitin polymer. The chain is Chitin synthase A (CHSA) from Ampelomyces quisqualis (Powdery mildew agent).